Consider the following 479-residue polypeptide: Adenosylhomocysteinase (479 aa).

Positions 66, 142, and 203 each coordinate substrate. Thr204–Thr206 contacts NAD(+). Lys233 and Asp237 together coordinate substrate. NAD(+) contacts are provided by residues Asn238, Gly267 to Gly272, Glu290, Asn325, Ile346 to His348, and Asn394.

Belongs to the adenosylhomocysteinase family. It depends on NAD(+) as a cofactor.

It localises to the cytoplasm. It carries out the reaction S-adenosyl-L-homocysteine + H2O = L-homocysteine + adenosine. It participates in amino-acid biosynthesis; L-homocysteine biosynthesis; L-homocysteine from S-adenosyl-L-homocysteine: step 1/1. Its function is as follows. May play a key role in the regulation of the intracellular concentration of adenosylhomocysteine. In Oleidesulfovibrio alaskensis (strain ATCC BAA-1058 / DSM 17464 / G20) (Desulfovibrio alaskensis), this protein is Adenosylhomocysteinase.